A 298-amino-acid chain; its full sequence is Nucleotide-binding protein GTNG_3015 (298 aa).

Gly17–Thr24 is an ATP binding site. Asp68–Ser71 lines the GTP pocket.

It belongs to the RapZ-like family.

In terms of biological role, displays ATPase and GTPase activities. This is Nucleotide-binding protein GTNG_3015 from Geobacillus thermodenitrificans (strain NG80-2).